Here is a 923-residue protein sequence, read N- to C-terminus: Mitochondrial 10-formyltetrahydrofolate dehydrogenase (923 aa).

A mitochondrion; not cleaved-targeting transit peptide spans 1-19 (MLRRGSQALRRFSTGRVYF). The interval 23–331 (LKLALIGQSL…PASQYFSTGE (309 aa)) is hydrolase domain. Phosphoserine is present on S31. K60 is modified (N6-succinyllysine). A (6R)-10-formyltetrahydrofolate-binding site is contributed by 110–112 (QFI). Catalysis depends on H128, which acts as the Proton donor. Residue D164 coordinates (6R)-10-formyltetrahydrofolate. The region spanning 339–416 (AEEVKVAETI…GFIQKVVRKL (78 aa)) is the Carrier domain. S375 is subject to O-(pantetheine 4'-phosphoryl)serine. The interval 438–923 (MVKMPYQCFI…LKTKTVTLEY (486 aa)) is aldehyde dehydrogenase domain. Residues 592–594 (IPW) and 618–621 (KPAQ) contribute to the NADP(+) site. At S650 the chain carries Phosphoserine. NADP(+) is bound by residues 651-656 (GGIAGQ) and 671-672 (GS). K681 is modified (N6-succinyllysine). Catalysis depends on E694, which acts as the Proton acceptor. Residue 694 to 695 (EL) participates in NADP(+) binding. Residue C728 is the Proton donor of the active site. Residue K778 coordinates NADP(+). K788 carries the post-translational modification N6-succinyllysine. 825–827 (ESF) contacts NADP(+). An N6-acetyllysine modification is found at K903.

In the N-terminal section; belongs to the GART family. The protein in the C-terminal section; belongs to the aldehyde dehydrogenase family. ALDH1L subfamily. Phosphopantetheinylation at Ser-375 by AASDHPPT is required for the formyltetrahydrofolate dehydrogenase activity. Highly expressed in pancreas, heart, brain and skeletal muscle.

It is found in the mitochondrion. The enzyme catalyses (6R)-10-formyltetrahydrofolate + NADP(+) + H2O = (6S)-5,6,7,8-tetrahydrofolate + CO2 + NADPH + H(+). Mitochondrial 10-formyltetrahydrofolate dehydrogenase that catalyzes the NADP(+)-dependent conversion of 10-formyltetrahydrofolate to tetrahydrofolate and carbon dioxide. This Homo sapiens (Human) protein is Mitochondrial 10-formyltetrahydrofolate dehydrogenase.